The following is a 126-amino-acid chain: Large ribosomal subunit protein bL17 (126 aa).

This sequence belongs to the bacterial ribosomal protein bL17 family. In terms of assembly, part of the 50S ribosomal subunit. Contacts protein L32.

This Aliivibrio salmonicida (strain LFI1238) (Vibrio salmonicida (strain LFI1238)) protein is Large ribosomal subunit protein bL17.